A 237-amino-acid polypeptide reads, in one-letter code: BTB/POZ domain-containing protein KCTD6 (237 aa).

The interval 1-104 (MDNGDWGYMM…FYQIEPLIQC (104 aa)) is interaction with ANK1 isoform Mu17. The interaction with CUL3 stretch occupies residues 10–110 (MTDPVTLNVG…LIQCLNDPKP (101 aa)). Residues 12–81 (DPVTLNVGGH…LRTSELTLPL (70 aa)) form the BTB domain. Residues 113–187 (PMDTFEEVVE…TFGPCDYHQE (75 aa)) are interaction with USP21.

Homopentamer. Interacts with KCTD11; KCTD6 and KCTD11 may associate in pentameric assemblies. Interacts (via BTB domain) with CUL3; initially a 4:4 stoichiometry has been reported, however, electron microscopy revealed pentameric states with a five-pointed pinwheel shape. The interaction with CUL3 is indicative for a participation in a BCR (BTB-CUL3-RBX1) E3 ubiquitin-protein ligase complex. Interacts with HDAC1; probably indirect as the interaction is requires the presence of KCTD11. Interacts with USP21 (preferentially catalytic inactive form). Interacts with ANK1 isoform Mu17; detected in striated muscle. Interacts with USP11. Highly expressed in cerebellum and brain. Expression is down-regulated in medulloblastoma.

Its subcellular location is the cytoplasm. The protein localises to the myofibril. It is found in the sarcomere. The protein resides in the m line. It functions in the pathway protein modification; protein ubiquitination. Probable substrate-specific adapter of a BCR (BTB-CUL3-RBX1) E3 ubiquitin-protein ligase complex mediating the ubiquitination and subsequent proteasomal degradation of target proteins. Promotes the ubiquitination of HDAC1; the function seems to depend on KCTD11:KCTD6 oligomerization. Can function as antagonist of the Hedgehog pathway by affecting the nuclear transfer of transcription factor GLI1; the function probably occurs via HDAC1 down-regulation, keeping GLI1 acetylated and inactive. Inhibits cell growth and tumorigenicity of medulloblastoma (MDB). Involved in regulating protein levels of ANK1 isoform Mu17 probably implicating CUL3-dependent proteasomal degradation. The polypeptide is BTB/POZ domain-containing protein KCTD6 (KCTD6) (Homo sapiens (Human)).